We begin with the raw amino-acid sequence, 277 residues long: Carbonyl reductase [NADPH] 1 (277 aa).

An N-acetylserine modification is found at serine 2. Serine 2 and serine 30 each carry phosphoserine. NADP(+) is bound by residues 10 to 34, 63 to 64, and asparagine 90; these read VTGA…GDVV and DI. Glutathione is bound by residues 95 to 97 and glutamine 106; that span reads FKT. Serine 140 is a substrate binding site. Position 193–194 (193–194) interacts with glutathione; it reads AY. The active-site Proton acceptor is tyrosine 194. Residues 194 to 198 and 231 to 233 contribute to the NADP(+) site; these read YGVTK and VRT. Position 239 is an N6-1-carboxyethyl lysine (lysine 239).

The protein belongs to the short-chain dehydrogenases/reductases (SDR) family. In terms of assembly, monomer.

The protein resides in the cytoplasm. It carries out the reaction a secondary alcohol + NADP(+) = a ketone + NADPH + H(+). The catalysed reaction is prostaglandin F2alpha + NADP(+) = prostaglandin E2 + NADPH + H(+). The enzyme catalyses prostaglandin E1 + NADP(+) = 15-oxoprostaglandin E1 + NADPH + H(+). It catalyses the reaction menadione + NADPH + H(+) = menadiol + NADP(+). It carries out the reaction prostaglandin D2 + NADP(+) = 15-oxoprostaglandin D2 + NADPH + H(+). The catalysed reaction is prostaglandin E2 + NADP(+) = 15-oxoprostaglandin E2 + NADPH + H(+). The enzyme catalyses prostaglandin F2alpha + NADP(+) = 15-oxoprostaglandin F2alpha + NADPH + H(+). It catalyses the reaction daunorubicin + NADPH + H(+) = 13-dihydrodaunorubicin + NADP(+). It carries out the reaction S-nitrosoglutathione + NADPH + H(+) = S-(hydroxysulfenamide)glutathione + NADP(+). The catalysed reaction is a primary alcohol + NADP(+) = an aldehyde + NADPH + H(+). The enzyme catalyses cortisol + NADPH + H(+) = 20beta-dihydrocortisol + NADP(+). It catalyses the reaction corticosterone + NADPH + H(+) = 20beta-dihydrocorticosterone + NADP(+). Functionally, NADPH-dependent reductase with broad substrate specificity. Catalyzes the reduction of a wide variety of carbonyl compounds including quinones, prostaglandins, menadione, plus various xenobiotics. Catalyzes the reduction of the antitumor anthracyclines doxorubicin and daunorubicin to the cardiotoxic compounds doxorubicinol and daunorubicinol. Can convert prostaglandin E to prostaglandin F2-alpha. Can bind glutathione, which explains its higher affinity for glutathione-conjugated substrates. Catalyzes the reduction of S-nitrosoglutathione. In addition, participates in the glucocorticoid metabolism by catalyzing the NADPH-dependent cortisol/corticosterone into 20beta-dihydrocortisol (20b-DHF) or 20beta-corticosterone (20b-DHB), which are weak agonists of NR3C1 and NR3C2 in adipose tissue. This Bos taurus (Bovine) protein is Carbonyl reductase [NADPH] 1.